The following is a 306-amino-acid chain: Ribosomal RNA small subunit methyltransferase A (306 aa).

Asn37, Val39, Gly64, Glu85, Asp115, and Asn134 together coordinate S-adenosyl-L-methionine.

Belongs to the class I-like SAM-binding methyltransferase superfamily. rRNA adenine N(6)-methyltransferase family. RsmA subfamily.

The protein localises to the cytoplasm. The enzyme catalyses adenosine(1518)/adenosine(1519) in 16S rRNA + 4 S-adenosyl-L-methionine = N(6)-dimethyladenosine(1518)/N(6)-dimethyladenosine(1519) in 16S rRNA + 4 S-adenosyl-L-homocysteine + 4 H(+). Specifically dimethylates two adjacent adenosines (A1518 and A1519) in the loop of a conserved hairpin near the 3'-end of 16S rRNA in the 30S particle. May play a critical role in biogenesis of 30S subunits. The chain is Ribosomal RNA small subunit methyltransferase A from Mycobacterium leprae (strain Br4923).